A 324-amino-acid polypeptide reads, in one-letter code: 33 kDa ribonucleoprotein, chloroplastic (324 aa).

The transit peptide at 1-71 directs the protein to the chloroplast; sequence MSGCCFSFAA…YRSSIFLSTC (71 aa). RRM domains lie at 114–192 and 217–296; these read GRLY…FPEV and HKLY…AGQK. The tract at residues 294-324 is disordered; that stretch reads GQKAPVSSPPVVETSPENDSDNSELLSSLSS. The segment covering 298–308 has biased composition (low complexity); the sequence is PVSSPPVVETS.

The protein resides in the plastid. It localises to the chloroplast. Its function is as follows. Could be involved in splicing and/or processing of chloroplast RNA's. This chain is 33 kDa ribonucleoprotein, chloroplastic, found in Nicotiana sylvestris (Wood tobacco).